We begin with the raw amino-acid sequence, 600 residues long: Glutamine--fructose-6-phosphate aminotransferase [isomerizing] (600 aa).

Catalysis depends on Cys-2, which acts as the Nucleophile; for GATase activity. The Glutamine amidotransferase type-2 domain occupies Cys-2–Glu-217. SIS domains lie at Ile-283–Phe-422 and Ile-452–Pro-590. Lys-595 acts as the For Fru-6P isomerization activity in catalysis.

In terms of assembly, homodimer.

Its subcellular location is the cytoplasm. It catalyses the reaction D-fructose 6-phosphate + L-glutamine = D-glucosamine 6-phosphate + L-glutamate. Catalyzes the first step in hexosamine metabolism, converting fructose-6P into glucosamine-6P using glutamine as a nitrogen source. This chain is Glutamine--fructose-6-phosphate aminotransferase [isomerizing], found in Geobacillus kaustophilus (strain HTA426).